A 659-amino-acid polypeptide reads, in one-letter code: Ion-translocating oxidoreductase complex subunit C (659 aa).

2 4Fe-4S ferredoxin-type domains span residues 366 to 397 and 407 to 436; these read TEMGLSEPEQSCIRCGLCVDACPAGLLPQQLY and KARNHNLFDCIECGACAYVCPSNIPLVQYY. Positions 377, 380, 383, 387, 416, 419, 422, and 426 each coordinate [4Fe-4S] cluster.

It belongs to the 4Fe4S bacterial-type ferredoxin family. RnfC subfamily. In terms of assembly, the complex is composed of six subunits: RnfA, RnfB, RnfC, RnfD, RnfE and RnfG. [4Fe-4S] cluster serves as cofactor.

The protein resides in the cell inner membrane. Functionally, part of a membrane-bound complex that couples electron transfer with translocation of ions across the membrane. This is Ion-translocating oxidoreductase complex subunit C from Yersinia pseudotuberculosis serotype IB (strain PB1/+).